The sequence spans 464 residues: tRNA modification GTPase MnmE (464 aa).

The (6S)-5-formyl-5,6,7,8-tetrahydrofolate site is built by Arg-27, Glu-90, and Lys-129. Residues 222–384 (GVALVLAGSV…LYDKIRALIS (163 aa)) form the TrmE-type G domain. GTP-binding positions include 232 to 237 (NAGKSS), 251 to 257 (SSYPGTT), and 276 to 279 (DTAG). The Mg(2+) site is built by Ser-236 and Thr-257. Lys-464 lines the (6S)-5-formyl-5,6,7,8-tetrahydrofolate pocket.

Belongs to the TRAFAC class TrmE-Era-EngA-EngB-Septin-like GTPase superfamily. TrmE GTPase family. Homodimer. Heterotetramer of two MnmE and two MnmG subunits. K(+) serves as cofactor.

It localises to the cytoplasm. Exhibits a very high intrinsic GTPase hydrolysis rate. Involved in the addition of a carboxymethylaminomethyl (cmnm) group at the wobble position (U34) of certain tRNAs, forming tRNA-cmnm(5)s(2)U34. The sequence is that of tRNA modification GTPase MnmE from Borreliella burgdorferi (strain ATCC 35210 / DSM 4680 / CIP 102532 / B31) (Borrelia burgdorferi).